The sequence spans 281 residues: Probable endonuclease 4 (281 aa).

Zn(2+) contacts are provided by His-69, His-109, Glu-145, Asp-179, His-182, His-216, Asp-229, His-231, and Glu-261.

It belongs to the AP endonuclease 2 family. Requires Zn(2+) as cofactor.

The enzyme catalyses Endonucleolytic cleavage to 5'-phosphooligonucleotide end-products.. Functionally, endonuclease IV plays a role in DNA repair. It cleaves phosphodiester bonds at apurinic or apyrimidinic (AP) sites, generating a 3'-hydroxyl group and a 5'-terminal sugar phosphate. In Buchnera aphidicola subsp. Acyrthosiphon pisum (strain APS) (Acyrthosiphon pisum symbiotic bacterium), this protein is Probable endonuclease 4.